A 455-amino-acid polypeptide reads, in one-letter code: Kynurenine--oxoglutarate transaminase 3 (455 aa).

Substrate is bound at residue Gly72. N6-acetyllysine; alternate is present on Lys117. At Lys117 the chain carries N6-succinyllysine; alternate. Asn219 is a binding site for substrate. An N6-(pyridoxal phosphate)lysine modification is found at Lys281. Arg430 contributes to the substrate binding site.

Belongs to the class-I pyridoxal-phosphate-dependent aminotransferase family. As to quaternary structure, homodimer. Pyridoxal 5'-phosphate is required as a cofactor. Widely expressed, with higher expression levels in liver, kidney, heart and neuroendocrine tissues.

It catalyses the reaction L-kynurenine + 2-oxoglutarate = kynurenate + L-glutamate + H2O. It carries out the reaction L-kynurenine + glyoxylate = kynurenate + glycine + H2O. The enzyme catalyses 3-hydroxy-L-kynurenine + glyoxylate = xanthurenate + glycine + H2O. The catalysed reaction is an S-substituted L-cysteine + H2O = a thiol + pyruvate + NH4(+). It functions in the pathway amino-acid degradation; L-kynurenine degradation; kynurenate from L-kynurenine: step 1/2. With respect to regulation, kynurenine transamination is competitively inhibited by cysteine, glutamine, histidine, methionine, leucine, or phenylalanine. Its function is as follows. Catalyzes the irreversible transamination of the L-tryptophan metabolite L-kynurenine to form kynurenic acid (KA), an intermediate in the tryptophan catabolic pathway which is also a broad spectrum antagonist of the three ionotropic excitatory amino acid receptors among others. May catalyze the beta-elimination of S-conjugates and Se-conjugates of L-(seleno)cysteine, resulting in the cleavage of the C-S or C-Se bond. Has transaminase activity towards L-kynurenine, tryptophan, phenylalanine, serine, cysteine, methionine, histidine, glutamine and asparagine with glyoxylate as an amino group acceptor (in vitro). Has lower activity with 2-oxoglutarate as amino group acceptor (in vitro). The polypeptide is Kynurenine--oxoglutarate transaminase 3 (Kyat3) (Mus musculus (Mouse)).